A 336-amino-acid chain; its full sequence is MAMQAHYQAEATEEENFGPQAITRLEQCGINANDVKKLEDAGFHTVEAVAYAPKKELLNIKGISEAKAEKILAEAAKLVPMGFTTATEFHQRRSEIIQIGTGSKELDKLLQGGIETGSITEMFGEFRTGKTQLCHTLAVTCQLPIDRGGGEGKAMYIDTEGTFRPERLLAVAERYGLSGSDVLDNVAYARAFNTDHQTQLLYQASAMMAESRYALLIVDSATALYRTDYSGRGELSARQMHLARFLRMLLRLADEFGVAVVITNQVVAQVDGAAMFAADPKKPIGGNIIAHASTTRLYLRKGRGETRICKIYDSPCLPEAEAMFAINADGVGDAKD.

The HhH domain maps to 45–74; that stretch reads TVEAVAYAPKKELLNIKGISEAKAEKILAE. Residue 124–131 participates in ATP binding; that stretch reads GEFRTGKT. A Nuclear export signal motif is present at residues 242 to 257; the sequence is LARFLRMLLRLADEFG.

Belongs to the RecA family. RAD51 subfamily. Forms linear homooligomers, giving rise to a RAD51 nucleoprotein filament, which is essential for strand-pairing reactions during DNA recombination.

It is found in the nucleus. Its subcellular location is the cytoplasm. The protein resides in the chromosome. In terms of biological role, plays an important role in homologous strand exchange, a key step in DNA repair through homologous recombination (HR). Binds to single-stranded DNA in an ATP-dependent manner to form nucleoprotein filaments which are essential for the homology search and strand exchange. Catalyzes the recognition of homology and strand exchange between homologous DNA partners to form a joint molecule between a processed DNA break and the repair template. Recruited to resolve stalled replication forks during replication stress. Also involved in interstrand cross-link repair. In Xenopus laevis (African clawed frog), this protein is DNA repair protein RAD51 homolog B (rad51-b).